Here is a 165-residue protein sequence, read N- to C-terminus: Phosphopantetheine adenylyltransferase (165 aa).

Residue threonine 9 participates in substrate binding. ATP is bound by residues 9–10 (TF) and histidine 17. Residues lysine 41, leucine 73, and arginine 87 each coordinate substrate. ATP is bound by residues 88 to 90 (GLR), glutamate 98, and 123 to 129 (YQFISGT).

The protein belongs to the bacterial CoaD family. As to quaternary structure, homohexamer. The cofactor is Mg(2+).

It is found in the cytoplasm. The enzyme catalyses (R)-4'-phosphopantetheine + ATP + H(+) = 3'-dephospho-CoA + diphosphate. The protein operates within cofactor biosynthesis; coenzyme A biosynthesis; CoA from (R)-pantothenate: step 4/5. Reversibly transfers an adenylyl group from ATP to 4'-phosphopantetheine, yielding dephospho-CoA (dPCoA) and pyrophosphate. This chain is Phosphopantetheine adenylyltransferase, found in Burkholderia lata (strain ATCC 17760 / DSM 23089 / LMG 22485 / NCIMB 9086 / R18194 / 383).